The following is a 621-amino-acid chain: Glutathione-regulated potassium-efflux system protein KefC (621 aa).

The next 12 helical transmembrane spans lie at histidine 4–valine 24, leucine 26–phenylalanine 46, serine 54–leucine 74, glycine 90–methionine 110, valine 114–methionine 134, valine 151–valine 171, leucine 178–leucine 198, valine 218–glycine 238, glycine 270–valine 290, leucine 294–isoleucine 314, tryptophan 327–glutamine 347, and alanine 359–threonine 379. The 120-residue stretch at glutamine 399 to threonine 518 folds into the RCK N-terminal domain. The tract at residues leucine 591–valine 621 is disordered. Over residues glutamate 603 to valine 621 the composition is skewed to basic and acidic residues.

The protein belongs to the monovalent cation:proton antiporter 2 (CPA2) transporter (TC 2.A.37) family. KefC subfamily. Homodimer. Interacts with the regulatory subunit KefF.

The protein resides in the cell inner membrane. In terms of biological role, pore-forming subunit of a potassium efflux system that confers protection against electrophiles. Catalyzes K(+)/H(+) antiport. This Enterobacter sp. (strain 638) protein is Glutathione-regulated potassium-efflux system protein KefC.